The sequence spans 343 residues: Holliday junction branch migration complex subunit RuvB (343 aa).

The interval 1-181 (MDRIIDSAAT…FGIVQRLEFY (181 aa)) is large ATPase domain (RuvB-L). Residues I20, R21, G62, K65, T66, T67, 128-130 (EDF), R171, Y181, and R218 each bind ATP. Residue T66 participates in Mg(2+) binding. A small ATPAse domain (RuvB-S) region spans residues 182-252 (SPEDLARIVR…VAQAAMQMLK (71 aa)). Residues 255–343 (QGGFDELDRR…SAFTDPEDLF (89 aa)) are head domain (RuvB-H). Residues R291, R310, and R315 each contribute to the DNA site.

Belongs to the RuvB family. As to quaternary structure, homohexamer. Forms an RuvA(8)-RuvB(12)-Holliday junction (HJ) complex. HJ DNA is sandwiched between 2 RuvA tetramers; dsDNA enters through RuvA and exits via RuvB. An RuvB hexamer assembles on each DNA strand where it exits the tetramer. Each RuvB hexamer is contacted by two RuvA subunits (via domain III) on 2 adjacent RuvB subunits; this complex drives branch migration. In the full resolvosome a probable DNA-RuvA(4)-RuvB(12)-RuvC(2) complex forms which resolves the HJ.

Its subcellular location is the cytoplasm. It carries out the reaction ATP + H2O = ADP + phosphate + H(+). Functionally, the RuvA-RuvB-RuvC complex processes Holliday junction (HJ) DNA during genetic recombination and DNA repair, while the RuvA-RuvB complex plays an important role in the rescue of blocked DNA replication forks via replication fork reversal (RFR). RuvA specifically binds to HJ cruciform DNA, conferring on it an open structure. The RuvB hexamer acts as an ATP-dependent pump, pulling dsDNA into and through the RuvAB complex. RuvB forms 2 homohexamers on either side of HJ DNA bound by 1 or 2 RuvA tetramers; 4 subunits per hexamer contact DNA at a time. Coordinated motions by a converter formed by DNA-disengaged RuvB subunits stimulates ATP hydrolysis and nucleotide exchange. Immobilization of the converter enables RuvB to convert the ATP-contained energy into a lever motion, pulling 2 nucleotides of DNA out of the RuvA tetramer per ATP hydrolyzed, thus driving DNA branch migration. The RuvB motors rotate together with the DNA substrate, which together with the progressing nucleotide cycle form the mechanistic basis for DNA recombination by continuous HJ branch migration. Branch migration allows RuvC to scan DNA until it finds its consensus sequence, where it cleaves and resolves cruciform DNA. This Xylella fastidiosa (strain Temecula1 / ATCC 700964) protein is Holliday junction branch migration complex subunit RuvB.